Here is a 172-residue protein sequence, read N- to C-terminus: PRELI domain containing protein 3A (172 aa).

The PRELI/MSF1 domain occupies 1–172 (MKIWSSEHVF…IIEHSESAVS (172 aa)).

It belongs to the slowmo family. In terms of assembly, interacts with TRIAP1.

Its subcellular location is the mitochondrion. In vitro, the TRIAP1:PRELID3A complex mediates the transfer of phosphatidic acid (PA) between liposomes and probably functions as a PA transporter across the mitochondrion intermembrane space. Phosphatidic acid import is required for cardiolipin (CL) synthesis in the mitochondrial inner membrane. This is PRELI domain containing protein 3A (PRELID3A) from Homo sapiens (Human).